A 747-amino-acid polypeptide reads, in one-letter code: Major facilitator superfamily domain-containing protein 6-B (747 aa).

The next 11 membrane-spanning stretches (helical) occupy residues leucine 15 to glutamine 35, lysine 75 to valine 95, threonine 222 to valine 242, tryptophan 271 to isoleucine 291, isoleucine 306 to histidine 326, valine 391 to tryptophan 411, threonine 420 to isoleucine 440, valine 453 to tyrosine 470, glycine 485 to leucine 507, leucine 520 to alanine 540, and glycine 546 to glycine 566. Composition is skewed to polar residues over residues asparagine 597–aspartate 606 and asparagine 652–alanine 668. 2 disordered regions span residues asparagine 597–alanine 625 and asparagine 652–histidine 747. Residues serine 675–serine 685 are compositionally biased toward low complexity.

The protein belongs to the major facilitator superfamily. MFSD6 family.

The protein resides in the membrane. This chain is Major facilitator superfamily domain-containing protein 6-B (mfsd6b), found in Danio rerio (Zebrafish).